The primary structure comprises 52 residues: Movement protein TGBp3 (52 aa).

At 1–3 the chain is on the lumenal side; the sequence is MHE. A helical membrane pass occupies residues 4 to 21; that stretch reads SHLVVILALLLLALWCLS. Residues 22–52 lie on the Cytoplasmic side of the membrane; that stretch reads TRPVQPSCHVEINGHSIIVTGNCWHSTQRPH.

The protein belongs to the Tymovirales TGBp3 protein family.

The protein resides in the host endoplasmic reticulum membrane. Functionally, plays a role in viral cell-to-cell propagation, by facilitating genome transport to neighboring plant cells through plasmosdesmata. May induce the formation of granular vesicles derived from the Endoplasmic reticulum, which align on actin filaments. The polypeptide is Movement protein TGBp3 (Foxtail mosaic virus).